The primary structure comprises 601 residues: Glutathione-regulated potassium-efflux system protein KefB (601 aa).

13 helical membrane passes run 4–24 (SDLLLAGVLFLFAAVIAVPLA), 29–49 (IGAVLGYLLAGIAIGPWGLGF), 55–75 (EILHFSELGVVFLMFIIGLEL), 87–107 (IFGVGAAQVMLSAAILGGLLM), 115–135 (AAVVGGIGLAMSSTAMALQLM), 152–172 (VLLFQDLAVIPALALVPLLAG), 177–197 (HVNWLTVGMKVLAFAGMLIGG), 207–227 (FIASSGVREVFTAATLLLVLG), 230–250 (LFMEALGLSMALGTFIAGVLL), 268–288 (GLLLGLFFISVGMALNLGVLY), 291–311 (LLWVAVSVAVLVAVKMLVLYL), 326–346 (FAGVLSQGGEFAFVLFSLPAS), and 356–376 (ALLLVAVTLSMMTTPLLMKGI). In terms of domain architecture, RCK N-terminal spans 400–519 (KPQVIIVGFG…AGVTQFSRET (120 aa)).

It belongs to the monovalent cation:proton antiporter 2 (CPA2) transporter (TC 2.A.37) family. KefB subfamily. Interacts with the regulatory subunit KefG.

The protein resides in the cell inner membrane. In terms of biological role, pore-forming subunit of a potassium efflux system that confers protection against electrophiles. Catalyzes K(+)/H(+) antiport. This Klebsiella pneumoniae (strain 342) protein is Glutathione-regulated potassium-efflux system protein KefB.